Reading from the N-terminus, the 163-residue chain is Nucleotide-binding protein all4662 (163 aa).

This sequence belongs to the YajQ family.

Nucleotide-binding protein. This chain is Nucleotide-binding protein all4662, found in Nostoc sp. (strain PCC 7120 / SAG 25.82 / UTEX 2576).